Consider the following 305-residue polypeptide: Tyrosine recombinase XerC (305 aa).

The region spanning 2 to 88 (TNKQRLVHLF…ALRSFYKFLL (87 aa)) is the Core-binding (CB) domain. Positions 109 to 295 (RIPSFLYEEE…SKDSLRKTYM (187 aa)) constitute a Tyr recombinase domain. Residues Arg149, Lys173, His247, Arg250, and His273 contribute to the active site. Tyr282 functions as the O-(3'-phospho-DNA)-tyrosine intermediate in the catalytic mechanism.

This sequence belongs to the 'phage' integrase family. XerC subfamily. Forms a cyclic heterotetrameric complex composed of two molecules of XerC and two molecules of XerD.

Its subcellular location is the cytoplasm. Its function is as follows. Site-specific tyrosine recombinase, which acts by catalyzing the cutting and rejoining of the recombining DNA molecules. The XerC-XerD complex is essential to convert dimers of the bacterial chromosome into monomers to permit their segregation at cell division. It also contributes to the segregational stability of plasmids. This chain is Tyrosine recombinase XerC, found in Bacillus pumilus (strain SAFR-032).